Consider the following 108-residue polypeptide: Small ribosomal subunit protein bS6 (108 aa).

This sequence belongs to the bacterial ribosomal protein bS6 family.

Functionally, binds together with bS18 to 16S ribosomal RNA. The sequence is that of Small ribosomal subunit protein bS6 from Dichelobacter nodosus (strain VCS1703A).